The following is a 105-amino-acid chain: Membrane-stabilizing protein A (105 aa).

Residues methionine 1–phenylalanine 21 traverse the membrane as a helical segment. At lysine 22–arginine 29 the chain is on the cytoplasmic side. The chain crosses the membrane as a helical span at residues isoleucine 30–phenylalanine 50. The Extracellular portion of the chain corresponds to proline 51 to tryptophan 55. The helical transmembrane segment at tryptophan 56–leucine 76 threads the bilayer. Topologically, residues lysine 77 to asparagine 84 are cytoplasmic. A helical membrane pass occupies residues isoleucine 85 to phenylalanine 105.

Belongs to the MspA family.

It localises to the membrane. Functionally, plays a role in toxin production, resistance to host innate immune mechanisms, and iron homeostasis. This is Membrane-stabilizing protein A from Staphylococcus aureus (strain NCTC 8325 / PS 47).